The following is a 130-amino-acid chain: MTDPISDFLTRLRNASKARQAETTSPHSKLREAIAAILKAEGYIADYKDGTDAAGHKTLVVALKYVDSAPAITGLTRVSTPGRRLYYSYQEIPRVLNGLGISIVSTSRGLMKDADCRRNKAGGELICNVW.

This sequence belongs to the universal ribosomal protein uS8 family. As to quaternary structure, part of the 30S ribosomal subunit. Contacts proteins S5 and S12.

One of the primary rRNA binding proteins, it binds directly to 16S rRNA central domain where it helps coordinate assembly of the platform of the 30S subunit. The protein is Small ribosomal subunit protein uS8 of Opitutus terrae (strain DSM 11246 / JCM 15787 / PB90-1).